Reading from the N-terminus, the 204-residue chain is Octanoyltransferase (204 aa).

The 176-residue stretch at Q27 to L202 folds into the BPL/LPL catalytic domain. Substrate-binding positions include R65–H72, S132–G134, and G145–A147. Residue C163 is the Acyl-thioester intermediate of the active site.

This sequence belongs to the LipB family.

The protein localises to the cytoplasm. It carries out the reaction octanoyl-[ACP] + L-lysyl-[protein] = N(6)-octanoyl-L-lysyl-[protein] + holo-[ACP] + H(+). The protein operates within protein modification; protein lipoylation via endogenous pathway; protein N(6)-(lipoyl)lysine from octanoyl-[acyl-carrier-protein]: step 1/2. Catalyzes the transfer of endogenously produced octanoic acid from octanoyl-acyl-carrier-protein onto the lipoyl domains of lipoate-dependent enzymes. Lipoyl-ACP can also act as a substrate although octanoyl-ACP is likely to be the physiological substrate. This Citrifermentans bemidjiense (strain ATCC BAA-1014 / DSM 16622 / JCM 12645 / Bem) (Geobacter bemidjiensis) protein is Octanoyltransferase.